Consider the following 188-residue polypeptide: ATP-dependent protease subunit HslV (188 aa).

Residue Thr-7 is part of the active site. 3 residues coordinate Na(+): Gly-162, Cys-165, and Ser-168.

It belongs to the peptidase T1B family. HslV subfamily. As to quaternary structure, a double ring-shaped homohexamer of HslV is capped on each side by a ring-shaped HslU homohexamer. The assembly of the HslU/HslV complex is dependent on binding of ATP.

The protein resides in the cytoplasm. The enzyme catalyses ATP-dependent cleavage of peptide bonds with broad specificity.. Allosterically activated by HslU binding. Its function is as follows. Protease subunit of a proteasome-like degradation complex believed to be a general protein degrading machinery. This chain is ATP-dependent protease subunit HslV, found in Thiobacillus denitrificans (strain ATCC 25259 / T1).